A 318-amino-acid chain; its full sequence is Strigolactone esterase D14 (318 aa).

Positions 1 to 11 (MLRSTHPPPSS) are enriched in pro residues. The disordered stretch occupies residues 1 to 48 (MLRSTHPPPSSPSSSSSGGGGGGGSSASSSSEKTMVGGGGGGGGGSGS). The segment covering 36–47 (VGGGGGGGGGSG) has biased composition (gly residues). Ser147 acts as the Nucleophile in catalysis. Substrate contacts are provided by Ser147 and Cys241. Catalysis depends on residues Asp268 and His297. Substrate is bound at residue His297.

Belongs to the AB hydrolase superfamily. Interacts with D53. The interaction between D53 and D14 is enhanced in the presence of strigolactones. The interaction with D53 occurs in the presence of (2'R) stereoisomers of strigolactones, but not (2'S) stereoisomers. Interacts with SLR1 in a strigolactone-dependent manner. Interacts with D3 in a strigolactone-dependent manner. As to expression, expressed in the parenchyma cells of the root stele and lateral roots, vascular tissues of vein and leaf sheath, ligule base, auricle base and stem base.

The protein resides in the cytoplasm. Its subcellular location is the nucleus. Functionally, involved in strigolactone (SL) signaling pathway. May function downstream of SL synthesis, as a component of hormone signaling or as an enzyme that participates in the conversion of SL to the bioactive form. Strigolactones are hormones that inhibit tillering and shoot branching through the MAX-dependent pathway, contribute to the regulation of shoot architectural response to phosphate-limiting conditions and function as rhizosphere signal that stimulates hyphal branching of arbuscular mycorrhizal fungi and trigger seed germination of root parasitic weeds. Strigolactone-dependent association of D14 with D3 and D53 (a repressor of SL signaling) triggers D53 ubiquitination and degradation. Hydrolyzes the butenolide ring of SLs. A reaction product D-OH is trapped in the cavity of D14, inducing the interaction with SLR1, and probably with other proteins such as D3 and D53. Contributes to the negative regulation of gibberellin signaling. The chain is Strigolactone esterase D14 from Oryza sativa subsp. japonica (Rice).